Here is a 212-residue protein sequence, read N- to C-terminus: Thymidylate kinase (212 aa).

Position 9 to 16 (9 to 16 (GIDGCGKT)) interacts with ATP.

Belongs to the thymidylate kinase family.

The enzyme catalyses dTMP + ATP = dTDP + ADP. Phosphorylation of dTMP to form dTDP in both de novo and salvage pathways of dTTP synthesis. This chain is Thymidylate kinase, found in Synechococcus sp. (strain CC9311).